Consider the following 214-residue polypeptide: Adenylate kinase (214 aa).

10–15 is a binding site for ATP; it reads GGGKGT. Residues 30-59 form an NMP region; sequence STGDMFRENVKGGTELGLKAKEYMDAGQLV. Residues Thr31, Arg36, 57–59, 85–88, and Gln92 each bind AMP; these read QLV and GFPR. Positions 126-163 are LID; it reads GRRVCRVCGATFHVLFNAPKEDGKCDKCGGELYQRSDD. Arg127 is an ATP binding site. Positions 130 and 133 each coordinate Zn(2+). Residue 136-137 coordinates ATP; the sequence is TF. Zn(2+) is bound by residues Cys150 and Cys153. Positions 160 and 171 each coordinate AMP. Gln199 provides a ligand contact to ATP.

The protein belongs to the adenylate kinase family. In terms of assembly, monomer.

It localises to the cytoplasm. The enzyme catalyses AMP + ATP = 2 ADP. It participates in purine metabolism; AMP biosynthesis via salvage pathway; AMP from ADP: step 1/1. Catalyzes the reversible transfer of the terminal phosphate group between ATP and AMP. Plays an important role in cellular energy homeostasis and in adenine nucleotide metabolism. The polypeptide is Adenylate kinase (Desulforudis audaxviator (strain MP104C)).